Consider the following 311-residue polypeptide: Lipoyl synthase (311 aa).

[4Fe-4S] cluster-binding residues include C36, C41, C47, C66, C70, C73, and S280. Residues 51–269 (RDGPGTATFM…RVAESEFGFL (219 aa)) form the Radical SAM core domain.

This sequence belongs to the radical SAM superfamily. Lipoyl synthase family. The cofactor is [4Fe-4S] cluster.

The protein resides in the cytoplasm. The catalysed reaction is [[Fe-S] cluster scaffold protein carrying a second [4Fe-4S](2+) cluster] + N(6)-octanoyl-L-lysyl-[protein] + 2 oxidized [2Fe-2S]-[ferredoxin] + 2 S-adenosyl-L-methionine + 4 H(+) = [[Fe-S] cluster scaffold protein] + N(6)-[(R)-dihydrolipoyl]-L-lysyl-[protein] + 4 Fe(3+) + 2 hydrogen sulfide + 2 5'-deoxyadenosine + 2 L-methionine + 2 reduced [2Fe-2S]-[ferredoxin]. It participates in protein modification; protein lipoylation via endogenous pathway; protein N(6)-(lipoyl)lysine from octanoyl-[acyl-carrier-protein]: step 2/2. Catalyzes the radical-mediated insertion of two sulfur atoms into the C-6 and C-8 positions of the octanoyl moiety bound to the lipoyl domains of lipoate-dependent enzymes, thereby converting the octanoylated domains into lipoylated derivatives. The polypeptide is Lipoyl synthase (Halobacterium salinarum (strain ATCC 29341 / DSM 671 / R1)).